We begin with the raw amino-acid sequence, 321 residues long: Cathepsin O (321 aa).

The signal sequence occupies residues 1 to 23 (MDVRALPWLPWLLWLLCRGGGDA). Residues 24 to 107 (DSRAPFTPTW…EVHMSIPNVS (84 aa)) constitute a propeptide, activation peptide. Residues Asn62 and Asn105 are each glycosylated (N-linked (GlcNAc...) asparagine). Cystine bridges form between Cys129/Cys170, Cys163/Cys204, and Cys262/Cys310. Residue Cys132 is part of the active site. Active-site residues include His269 and Asn289.

This sequence belongs to the peptidase C1 family. As to expression, expressed in all tissues examined. High levels seen in the ovary, kidney and placenta while low levels seen in thymus and skeletal muscle.

It localises to the lysosome. It catalyses the reaction The recombinant human enzyme hydrolyzes synthetic endopeptidase substrates including Z-Phe-Arg-NHMec and Z-Arg-Arg-NHMec.. Functionally, proteolytic enzyme possibly involved in normal cellular protein degradation and turnover. In Homo sapiens (Human), this protein is Cathepsin O (CTSO).